The sequence spans 39 residues: GVDKEGCRKLLGGCTIDDDCCPHLGCNKKYWHCGWDGTF.

Disulfide bonds link Cys-7–Cys-21, Cys-14–Cys-26, and Cys-20–Cys-33. Residue Phe-39 is modified to Phenylalanine amide.

As to expression, expressed by the venom gland.

It localises to the secreted. Inhibits mammalian voltage-gated sodium channel subtypes Nav1.5/SCN5A and Nav1.8/SCN10A by shifting the voltage dependence of channel activation to more depolarized potentials and by blocking the inward component of the sodium current. In vivo, this toxin causes erect, elevated tail, initial partial ataxia, followed by recovery over approximately 1 hour after injection and the progressive development of shaking. Although paralysis subsides, the body tremors never cease and persist until the end of the experiment. This Ceratogyrus marshalli (Straighthorned baboon tarantula) protein is Beta-theraphotoxin-Cm2a.